The chain runs to 1822 residues: ADP-ribosylation factor guanine nucleotide-exchange factor sec72 (1822 aa).

Disordered stretches follow at residues 1 to 54 and 66 to 126; these read MQDA…NGMD and DAVV…RASL. A Phosphoserine modification is found at serine 44. Over residues 72-84 the composition is skewed to polar residues; it reads DINTEDSSLSPAK. Basic and acidic residues predominate over residues 85–110; sequence QENEKSPEGIEQKYQEEDLKDDKKSN. A phosphoserine mark is found at serine 122 and serine 125. The short motif at 547 to 551 is the HUS box element; the sequence is NYDCD. Threonine 597 is subject to Phosphothreonine. A Phosphoserine modification is found at serine 653. Residue threonine 654 is modified to Phosphothreonine. A Phosphoserine modification is found at serine 669. The SEC7 domain occupies 701–889; that stretch reads QFESNKQRKK…GFVYDDILKN (189 aa). Residues 898 to 1106 are HDS1 domain; the sequence is ELAAIAPLMN…NARVRRKNVN (209 aa). Serine 1110 is modified (phosphoserine). 2 disordered regions span residues 1111–1131 and 1584–1610; these read NSIR…SLSK and ENEN…TSSI. Composition is skewed to low complexity over residues 1117-1130 and 1597-1610; these read SGST…RSLS and SLPE…TSSI. Residues serine 1606 and serine 1609 each carry the phosphoserine modification.

Its subcellular location is the cytoplasm. It localises to the golgi apparatus. The protein localises to the trans-Golgi network. The protein resides in the cytoplasmic vesicle. It is found in the COPI-coated vesicle membrane. Its subcellular location is the COPII-coated vesicle membrane. In terms of biological role, guanine exchange factor that acts as an activator of arf1 at the trans-Golgi net-work and is thus involved in vesicular budding and traffic between compartments of the Golgi apparatus. Activation of Arf (ADP-ribosylation factor) GTPases is essential for vesicle formation via recruitment of cargo adapters and coat proteins necessary for Golgi trafficking. Involved in the resistance to tamoxifen (TAM), an anticancer drug used to treat estrogen receptor (ER)-positive breast cancer. This is ADP-ribosylation factor guanine nucleotide-exchange factor sec72 from Schizosaccharomyces pombe (strain 972 / ATCC 24843) (Fission yeast).